A 689-amino-acid chain; its full sequence is Glycine--tRNA ligase beta subunit (689 aa).

This sequence belongs to the class-II aminoacyl-tRNA synthetase family. Tetramer of two alpha and two beta subunits.

It is found in the cytoplasm. It catalyses the reaction tRNA(Gly) + glycine + ATP = glycyl-tRNA(Gly) + AMP + diphosphate. The polypeptide is Glycine--tRNA ligase beta subunit (Aeromonas salmonicida (strain A449)).